Here is a 209-residue protein sequence, read N- to C-terminus: Fibroblast growth factor 10 (209 aa).

The N-terminal stretch at Met-1–Cys-36 is a signal peptide. N-linked (GlcNAc...) asparagine glycosylation is found at Asn-50 and Asn-197.

It belongs to the heparin-binding growth factors family. In terms of assembly, interacts with FGFR1 and FGFR2. Interacts with FGFBP1. Expressed abundantly in embryos and the lung, and at much lower levels in brain and heart.

The protein localises to the secreted. Plays an important role in the regulation of embryonic development, cell proliferation and cell differentiation. Required for normal branching morphogenesis. May play a role in wound healing. In Mus musculus (Mouse), this protein is Fibroblast growth factor 10 (Fgf10).